The chain runs to 158 residues: Sporulation-delaying protein SdpA (158 aa).

The protein resides in the cytoplasm. Required for the maturation of SdpC to SDP. Not required for SdpC signal peptide cleavage, secretion from the cell or disulfide bond formation. This Bacillus subtilis (strain 168) protein is Sporulation-delaying protein SdpA.